Here is an 88-residue protein sequence, read N- to C-terminus: Cell division topological specificity factor (88 aa).

It belongs to the MinE family.

Prevents the cell division inhibition by proteins MinC and MinD at internal division sites while permitting inhibition at polar sites. This ensures cell division at the proper site by restricting the formation of a division septum at the midpoint of the long axis of the cell. The chain is Cell division topological specificity factor from Paracidovorax citrulli (strain AAC00-1) (Acidovorax citrulli).